A 254-amino-acid chain; its full sequence is Imidazole glycerol phosphate synthase subunit HisF (254 aa).

Active-site residues include Asp-12 and Asp-131.

Belongs to the HisA/HisF family. As to quaternary structure, heterodimer of HisH and HisF.

The protein resides in the cytoplasm. It catalyses the reaction 5-[(5-phospho-1-deoxy-D-ribulos-1-ylimino)methylamino]-1-(5-phospho-beta-D-ribosyl)imidazole-4-carboxamide + L-glutamine = D-erythro-1-(imidazol-4-yl)glycerol 3-phosphate + 5-amino-1-(5-phospho-beta-D-ribosyl)imidazole-4-carboxamide + L-glutamate + H(+). The protein operates within amino-acid biosynthesis; L-histidine biosynthesis; L-histidine from 5-phospho-alpha-D-ribose 1-diphosphate: step 5/9. Its function is as follows. IGPS catalyzes the conversion of PRFAR and glutamine to IGP, AICAR and glutamate. The HisF subunit catalyzes the cyclization activity that produces IGP and AICAR from PRFAR using the ammonia provided by the HisH subunit. This is Imidazole glycerol phosphate synthase subunit HisF from Janthinobacterium sp. (strain Marseille) (Minibacterium massiliensis).